We begin with the raw amino-acid sequence, 142 residues long: FAD synthase (142 aa).

Residues 9–10, 14–17, D92, and Y119 contribute to the ATP site; these read TF and HPGH.

The protein belongs to the archaeal FAD synthase family. In terms of assembly, homodimer. The cofactor is a divalent metal cation.

The enzyme catalyses FMN + ATP + H(+) = FAD + diphosphate. It participates in cofactor biosynthesis; FAD biosynthesis; FAD from FMN: step 1/1. Functionally, catalyzes the transfer of the AMP portion of ATP to flavin mononucleotide (FMN) to produce flavin adenine dinucleotide (FAD) coenzyme. This is FAD synthase from Halorhabdus utahensis (strain DSM 12940 / JCM 11049 / AX-2).